The following is a 245-amino-acid chain: DNA repair protein RecO (245 aa).

The protein belongs to the RecO family.

Involved in DNA repair and RecF pathway recombination. In Porphyromonas gingivalis (strain ATCC 33277 / DSM 20709 / CIP 103683 / JCM 12257 / NCTC 11834 / 2561), this protein is DNA repair protein RecO.